Reading from the N-terminus, the 247-residue chain is Carboxy-S-adenosyl-L-methionine synthase (247 aa).

Residues Y40, 65–67 (GSS), 90–91 (DN), 122–123 (DI), N137, and R204 each bind S-adenosyl-L-methionine.

Belongs to the class I-like SAM-binding methyltransferase superfamily. Cx-SAM synthase family. As to quaternary structure, homodimer.

It catalyses the reaction prephenate + S-adenosyl-L-methionine = carboxy-S-adenosyl-L-methionine + 3-phenylpyruvate + H2O. In terms of biological role, catalyzes the conversion of S-adenosyl-L-methionine (SAM) to carboxy-S-adenosyl-L-methionine (Cx-SAM). This Pseudomonas syringae pv. syringae (strain B728a) protein is Carboxy-S-adenosyl-L-methionine synthase.